The sequence spans 292 residues: MLKGATLIAGPTASGKSALALQMARERDGVIVNADSMQVYSVLHLLTARPGPEELAMAPHRLYGHVPPSKPYSTGRWISDVRELIEAEALARRAVIFVGGTGLYFRALTEGLSPMPEIPEAVRIRWRKRLAEEGGEALHRLLGEADPLAASRIRPSDSQRIVRALEVVEASGRPISYWQGQASHPLVDMTSCRKIVLMPDRNTLASRIEKRFDQMLRHGAVEEVKQLLALDLPPSMPAMKAIGVREISAVLAGEISLDEAGSRAIAATRQYAKRQITWFRHQLGPDWEHMPV.

ATP is bound at residue 10 to 17 (GPTASGKS). Residue 12-17 (TASGKS) coordinates substrate. Interaction with substrate tRNA stretches follow at residues 35-38 (DSMQ) and 159-163 (QRIVR).

It belongs to the IPP transferase family. As to quaternary structure, monomer. Mg(2+) serves as cofactor.

It carries out the reaction adenosine(37) in tRNA + dimethylallyl diphosphate = N(6)-dimethylallyladenosine(37) in tRNA + diphosphate. Functionally, catalyzes the transfer of a dimethylallyl group onto the adenine at position 37 in tRNAs that read codons beginning with uridine, leading to the formation of N6-(dimethylallyl)adenosine (i(6)A). In Chelativorans sp. (strain BNC1), this protein is tRNA dimethylallyltransferase.